We begin with the raw amino-acid sequence, 699 residues long: UvrABC system protein B (699 aa).

One can recognise a Helicase ATP-binding domain in the interval 35 to 188 (ERINNGEKDV…DHLLRKFVSM (154 aa)). 48-55 (GATGTGKS) is an ATP binding site. The short motif at 101-124 (YYDYYQPEAYVAQTDTFIEKDSSI) is the Beta-hairpin element. The 167-residue stretch at 438-604 (QIDDLLGEIR…PLRKKIADIT (167 aa)) folds into the Helicase C-terminal domain. The UVR domain occupies 654 to 689 (VGLIEQLTEQMHGAAAELQFEVAARIRDEVKELKRE).

It belongs to the UvrB family. Forms a heterotetramer with UvrA during the search for lesions. Interacts with UvrC in an incision complex.

The protein localises to the cytoplasm. In terms of biological role, the UvrABC repair system catalyzes the recognition and processing of DNA lesions. A damage recognition complex composed of 2 UvrA and 2 UvrB subunits scans DNA for abnormalities. Upon binding of the UvrA(2)B(2) complex to a putative damaged site, the DNA wraps around one UvrB monomer. DNA wrap is dependent on ATP binding by UvrB and probably causes local melting of the DNA helix, facilitating insertion of UvrB beta-hairpin between the DNA strands. Then UvrB probes one DNA strand for the presence of a lesion. If a lesion is found the UvrA subunits dissociate and the UvrB-DNA preincision complex is formed. This complex is subsequently bound by UvrC and the second UvrB is released. If no lesion is found, the DNA wraps around the other UvrB subunit that will check the other stand for damage. This chain is UvrABC system protein B, found in Paenarthrobacter aurescens (strain TC1).